A 116-amino-acid chain; its full sequence is NADH-ubiquinone oxidoreductase chain 3 (116 aa).

The next 3 membrane-spanning stretches (helical) occupy residues 3 to 23 (LITT…TISF), 56 to 76 (FFLI…LLPL), and 87 to 107 (LTLI…IYEW).

This sequence belongs to the complex I subunit 3 family.

Its subcellular location is the mitochondrion membrane. It carries out the reaction a ubiquinone + NADH + 5 H(+)(in) = a ubiquinol + NAD(+) + 4 H(+)(out). Functionally, core subunit of the mitochondrial membrane respiratory chain NADH dehydrogenase (Complex I) that is believed to belong to the minimal assembly required for catalysis. Complex I functions in the transfer of electrons from NADH to the respiratory chain. The immediate electron acceptor for the enzyme is believed to be ubiquinone. The polypeptide is NADH-ubiquinone oxidoreductase chain 3 (MT-ND3) (Oncorhynchus tshawytscha (Chinook salmon)).